Reading from the N-terminus, the 279-residue chain is Large ribosomal subunit protein uL2 (279 aa).

Disordered regions lie at residues 32–53 (SLLRPLPKHGGRNNAGRITTRH) and 225–279 (AMNP…KKRK). Residues 253-268 (KEGRTRHINKPSDKLI) are compositionally biased toward basic and acidic residues. Over residues 269–279 (VRRRNAGKKRK) the composition is skewed to basic residues.

Belongs to the universal ribosomal protein uL2 family. As to quaternary structure, part of the 50S ribosomal subunit. Forms a bridge to the 30S subunit in the 70S ribosome.

One of the primary rRNA binding proteins. Required for association of the 30S and 50S subunits to form the 70S ribosome, for tRNA binding and peptide bond formation. It has been suggested to have peptidyltransferase activity; this is somewhat controversial. Makes several contacts with the 16S rRNA in the 70S ribosome. The chain is Large ribosomal subunit protein uL2 from Clavibacter michiganensis subsp. michiganensis (strain NCPPB 382).